Consider the following 152-residue polypeptide: S-protein homolog 4 (152 aa).

The signal sequence occupies residues 1 to 23; that stretch reads MTTMLKTQVHVVVIYLLIQIAFS. The N-linked (GlcNAc...) asparagine glycan is linked to Asn-71.

This sequence belongs to the plant self-incompatibility (S1) protein family.

Its subcellular location is the secreted. The polypeptide is S-protein homolog 4 (Arabidopsis thaliana (Mouse-ear cress)).